The primary structure comprises 305 residues: Homoserine O-acetyltransferase (305 aa).

Cys-142 acts as the Acyl-thioester intermediate in catalysis. 2 residues coordinate substrate: Lys-163 and Ser-192. The active-site Proton acceptor is the His-235. Residue Glu-237 is part of the active site. A substrate-binding site is contributed by Arg-249.

Belongs to the MetA family.

Its subcellular location is the cytoplasm. The enzyme catalyses L-homoserine + acetyl-CoA = O-acetyl-L-homoserine + CoA. Its pathway is amino-acid biosynthesis; L-methionine biosynthesis via de novo pathway; O-acetyl-L-homoserine from L-homoserine: step 1/1. In terms of biological role, transfers an acetyl group from acetyl-CoA to L-homoserine, forming acetyl-L-homoserine. This is Homoserine O-acetyltransferase from Cereibacter sphaeroides (strain KD131 / KCTC 12085) (Rhodobacter sphaeroides).